The sequence spans 127 residues: Small ribosomal subunit protein uS11 (127 aa).

Belongs to the universal ribosomal protein uS11 family. In terms of assembly, part of the 30S ribosomal subunit. Interacts with proteins S7 and S18. Binds to IF-3.

Its function is as follows. Located on the platform of the 30S subunit, it bridges several disparate RNA helices of the 16S rRNA. Forms part of the Shine-Dalgarno cleft in the 70S ribosome. The protein is Small ribosomal subunit protein uS11 of Lactococcus lactis subsp. lactis (strain IL1403) (Streptococcus lactis).